The primary structure comprises 51 residues: Large ribosomal subunit protein eL39 (51 aa).

The interval 1-22 is disordered; it reads MAAQKSFRIKQKMAKAKKQNRP. Basic residues predominate over residues 7 to 20; sequence FRIKQKMAKAKKQN.

This sequence belongs to the eukaryotic ribosomal protein eL39 family. In terms of assembly, component of the large ribosomal subunit (LSU). Mature yeast ribosomes consist of a small (40S) and a large (60S) subunit. The 40S small subunit contains 1 molecule of ribosomal RNA (18S rRNA) and 33 different proteins (encoded by 57 genes). The large 60S subunit contains 3 rRNA molecules (25S, 5.8S and 5S rRNA) and 46 different proteins (encoded by 81 genes). eL39 interacts with YIH1.

Its subcellular location is the cytoplasm. Component of the ribosome, a large ribonucleoprotein complex responsible for the synthesis of proteins in the cell. The small ribosomal subunit (SSU) binds messenger RNAs (mRNAs) and translates the encoded message by selecting cognate aminoacyl-transfer RNA (tRNA) molecules. The large subunit (LSU) contains the ribosomal catalytic site termed the peptidyl transferase center (PTC), which catalyzes the formation of peptide bonds, thereby polymerizing the amino acids delivered by tRNAs into a polypeptide chain. The nascent polypeptides leave the ribosome through a tunnel in the LSU and interact with protein factors that function in enzymatic processing, targeting, and the membrane insertion of nascent chains at the exit of the ribosomal tunnel. The polypeptide is Large ribosomal subunit protein eL39 (Saccharomyces cerevisiae (strain ATCC 204508 / S288c) (Baker's yeast)).